Reading from the N-terminus, the 429-residue chain is 3-phosphoshikimate 1-carboxyvinyltransferase (429 aa).

3 residues coordinate 3-phosphoshikimate: Lys-23, Ser-24, and Arg-28. A phosphoenolpyruvate-binding site is contributed by Lys-23. Phosphoenolpyruvate is bound by residues Gly-95 and Arg-123. The 3-phosphoshikimate site is built by Ser-168, Gln-170, Asp-316, and Lys-343. Gln-170 contacts phosphoenolpyruvate. The Proton acceptor role is filled by Asp-316. The phosphoenolpyruvate site is built by Arg-347 and Arg-389.

Belongs to the EPSP synthase family. As to quaternary structure, monomer.

It localises to the cytoplasm. It carries out the reaction 3-phosphoshikimate + phosphoenolpyruvate = 5-O-(1-carboxyvinyl)-3-phosphoshikimate + phosphate. The protein operates within metabolic intermediate biosynthesis; chorismate biosynthesis; chorismate from D-erythrose 4-phosphate and phosphoenolpyruvate: step 6/7. Catalyzes the transfer of the enolpyruvyl moiety of phosphoenolpyruvate (PEP) to the 5-hydroxyl of shikimate-3-phosphate (S3P) to produce enolpyruvyl shikimate-3-phosphate and inorganic phosphate. The chain is 3-phosphoshikimate 1-carboxyvinyltransferase from Bacillus cereus (strain ZK / E33L).